A 299-amino-acid polypeptide reads, in one-letter code: MDLSELERDNTGRCRLSSPVPAVCRKEPCVLGVDEAGRGPVLGPMVYAICYCPLPRLADLEALKVADSKTLLESERERLFAKMEDTDFVGWALDVLSPNLISTSMLGRVKYNLNSLSHDTATGLIQYALDQGVNVTQVFVDTVGMPETYQARLQQSFPGIEVTVKAKADALYPVVSAASICAKVARDQAVKKWQFVEKLQDLDTDYGSGYPNDPKTKAWLKEHVEPVFGFPQFVRFSWRTAQTILEKEAEDVIWEDSASENQEGLRKITSYFLNEGSQARPRSSHRYFLERGLESATSL.

M1 carries the post-translational modification N-acetylmethionine. The 223-residue stretch at 28–250 (PCVLGVDEAG…AQTILEKEAE (223 aa)) folds into the RNase H type-2 domain. D34, E35, and D141 together coordinate a divalent metal cation. Phosphothreonine is present on residues T204 and T216. Residues S257 and S277 each carry the phosphoserine modification.

It belongs to the RNase HII family. Eukaryotic subfamily. The RNase H2 complex is a heterotrimer composed of the catalytic subunit RNASEH2A and the non-catalytic subunits RNASEH2B and RNASEH2C. Mn(2+) serves as cofactor. Mg(2+) is required as a cofactor.

The protein localises to the nucleus. The enzyme catalyses Endonucleolytic cleavage to 5'-phosphomonoester.. Functionally, catalytic subunit of RNase HII, an endonuclease that specifically degrades the RNA of RNA:DNA hybrids. Participates in DNA replication, possibly by mediating the removal of lagging-strand Okazaki fragment RNA primers during DNA replication. Mediates the excision of single ribonucleotides from DNA:RNA duplexes. In Homo sapiens (Human), this protein is Ribonuclease H2 subunit A (RNASEH2A).